We begin with the raw amino-acid sequence, 821 residues long: Dapper homolog 1 (821 aa).

Residues 88–136 (LNTEEKLLEENILLLRKQLNCLRRRDAGLINQLQELDRQISDLRLDTET) are a coiled coil. Disordered stretches follow at residues 288–312 (SKPG…SSWH), 386–432 (QDAS…STTN), 564–615 (NSAS…KTKR), and 627–655 (ERHT…VLAK). Residues 388 to 400 (ASATSTEPSTASP) are compositionally biased toward low complexity. Positions 401–432 (QRQWSAESKGGTPQNGAYLSSSQPQNSYSTTN) are enriched in polar residues. 3 stretches are compositionally biased toward basic residues: residues 584–593 (DKHRTGSRRT), 601–615 (HLHK…KTKR), and 639–649 (AQRHHGHHRHH). A PDZ-binding motif is present at residues 818 to 821 (MTTV).

The protein belongs to the dapper family. As to quaternary structure, interacts with dvl2.

It is found in the cytoplasm. Functionally, involved in regulation of intracellular signaling pathways during development. Specifically thought to play a role in canonical and/or non-canonical Wnt signaling pathways through interaction with DSH (Dishevelled) family proteins. Binds to dvl2 and may regulate the degradation of ctnnb1/beta-catenin, thereby modulating the transcriptional activation of target genes of the Wnt signaling pathway. Seems to activate the canonical Wnt signaling pathway. The polypeptide is Dapper homolog 1 (dact1) (Danio rerio (Zebrafish)).